The chain runs to 134 residues: MPFLELDTNLPANRVPAGLEKRLCAAAASILGKPADRVNVTVRPGLAMALSGSTEPCAQLSISSIGVVGTAEDNRSHSAHFFEFLTKELALGQDRFPTVLSTSPAAHGGPRCPGEIIEGKKSCLNEEALFIYFI.

This sequence belongs to the MIF family.

It localises to the cytoplasm. Functionally, may have lyase activity. The protein is D-dopachrome decarboxylase-like protein (DDTL) of Homo sapiens (Human).